Consider the following 294-residue polypeptide: uncharacterized protein (294 aa).

Residues 1 to 215 (MTTAITPDKK…DQDDDDQKDL (215 aa)) are disordered. 2 stretches are compositionally biased toward basic residues: residues 27-43 (TKPRRSSKTSKKRKSKK) and 50-78 (AKKRKTKRSKKSAKRTKRSAPKKAPKKAP). The segment covering 79–88 (MKAPSKPAAK) has biased composition (low complexity). Over residues 92-102 (QQAQASLQKPI) the composition is skewed to polar residues. Positions 118-136 (PRPPTPIPPTGVKPEPAPR) are enriched in pro residues. Residues 145 to 160 (SVSSTTPRTSATTGTT) show a composition bias toward low complexity.

This is an uncharacterized protein from Caenorhabditis elegans.